The sequence spans 352 residues: Maleylacetate reductase (352 aa).

It belongs to the iron-containing alcohol dehydrogenase family.

The enzyme catalyses 3-oxoadipate + NAD(+) = maleylacetate + NADH + H(+). It carries out the reaction 3-oxoadipate + NADP(+) = maleylacetate + NADPH + H(+). It functions in the pathway aromatic compound metabolism; 3-chlorocatechol degradation. This Pseudomonas aeruginosa protein is Maleylacetate reductase (clcE).